Consider the following 423-residue polypeptide: Gamma-glutamyl phosphate reductase (423 aa).

It belongs to the gamma-glutamyl phosphate reductase family.

It is found in the cytoplasm. It catalyses the reaction L-glutamate 5-semialdehyde + phosphate + NADP(+) = L-glutamyl 5-phosphate + NADPH + H(+). It functions in the pathway amino-acid biosynthesis; L-proline biosynthesis; L-glutamate 5-semialdehyde from L-glutamate: step 2/2. Functionally, catalyzes the NADPH-dependent reduction of L-glutamate 5-phosphate into L-glutamate 5-semialdehyde and phosphate. The product spontaneously undergoes cyclization to form 1-pyrroline-5-carboxylate. This chain is Gamma-glutamyl phosphate reductase, found in Burkholderia ambifaria (strain MC40-6).